Reading from the N-terminus, the 683-residue chain is Multidrug resistance protein MdtO (683 aa).

Helical transmembrane passes span 43-63 (VILISMTFEIPFVALSLAVLF), 75-95 (FVAILFVVATVLEIGSLFLIY), 100-120 (GEPLIRLIIAGPILMGCMFLM), 125-145 (LGLVFFAVAIVAIYGQTFPAM), 158-178 (WCIVVGLYPTLLMTLIGVLWF), 402-422 (FGGAFCGAILALLFTLLVMPW), 426-446 (IVELLFVLAPIFLLGAWIATS), 457-477 (MVVTFALATLENVFGPVYDLV), and 483-503 (ALGIIIGTVVSAVIYTFVWPE).

Belongs to the MdtO family. Could be part of a tripartite efflux system composed of MdtN, MdtO and MdtP.

The protein localises to the cell inner membrane. Its function is as follows. Could be involved in resistance to puromycin, acriflavine and tetraphenylarsonium chloride. This is Multidrug resistance protein MdtO (mdtO) from Escherichia coli O157:H7.